The sequence spans 377 residues: Diels-Alderase fsa2 (377 aa).

Belongs to the Diels-Alderase family.

It catalyses the reaction (5S)-3-[(2E,6R,8E,10E,12E)-2,6-dimethyltetradeca-2,8,10,12-tetraenoyl]-5-(hydroxymethyl)pyrrolidine-2,4-dione = trichosetin. It participates in mycotoxin biosynthesis. Diels-Alderase; part of the gene cluster that mediates the biosynthesis of equisetin, a trans-fused decalin-containing tetramic acid with antimicrobial activity. The PKS module of eqxS together with the enoylreductase eqxC catalyze the formation of the polyketide unit which is then conjugated to L-serine by the condensation domain of the eqxS NRPS module. Activity of the Dieckmann cyclase domain (RED) results in release of the Dieckmann product intermediate. Diels-Alderase eqx3 is involved in endo-selective Diels-Alder cycloaddition to form the decalin ring, leading to the production of N-desmethylequisetin also called trichosetin. Subsequent N-methylation is carried out by eqxD to give equisetin. This Fusarium heterosporum protein is Diels-Alderase fsa2.